The chain runs to 172 residues: Tail tube protein (172 aa).

This sequence belongs to the P2likevirus major tail tube protein family.

It localises to the virion. Functionally, forms the virus tail tube. The polypeptide is Tail tube protein (FII) (Escherichia phage P2 (Bacteriophage P2)).